Here is a 377-residue protein sequence, read N- to C-terminus: Succinyl-diaminopimelate desuccinylase (377 aa).

Histidine 68 is a Zn(2+) binding site. Aspartate 70 is a catalytic residue. Aspartate 101 is a binding site for Zn(2+). Glutamate 135 (proton acceptor) is an active-site residue. Positions 136, 164, and 350 each coordinate Zn(2+).

This sequence belongs to the peptidase M20A family. DapE subfamily. As to quaternary structure, homodimer. It depends on Zn(2+) as a cofactor. Requires Co(2+) as cofactor.

It catalyses the reaction N-succinyl-(2S,6S)-2,6-diaminopimelate + H2O = (2S,6S)-2,6-diaminopimelate + succinate. The protein operates within amino-acid biosynthesis; L-lysine biosynthesis via DAP pathway; LL-2,6-diaminopimelate from (S)-tetrahydrodipicolinate (succinylase route): step 3/3. Catalyzes the hydrolysis of N-succinyl-L,L-diaminopimelic acid (SDAP), forming succinate and LL-2,6-diaminopimelate (DAP), an intermediate involved in the bacterial biosynthesis of lysine and meso-diaminopimelic acid, an essential component of bacterial cell walls. In Vibrio cholerae serotype O1 (strain ATCC 39541 / Classical Ogawa 395 / O395), this protein is Succinyl-diaminopimelate desuccinylase.